Here is a 495-residue protein sequence, read N- to C-terminus: Probable cytosol aminopeptidase (495 aa).

Mn(2+)-binding residues include Lys267 and Asp272. Lys279 is an active-site residue. Residues Asp290, Asp349, and Glu351 each coordinate Mn(2+). Residue Arg353 is part of the active site.

Belongs to the peptidase M17 family. Mn(2+) is required as a cofactor.

It localises to the cytoplasm. It catalyses the reaction Release of an N-terminal amino acid, Xaa-|-Yaa-, in which Xaa is preferably Leu, but may be other amino acids including Pro although not Arg or Lys, and Yaa may be Pro. Amino acid amides and methyl esters are also readily hydrolyzed, but rates on arylamides are exceedingly low.. It carries out the reaction Release of an N-terminal amino acid, preferentially leucine, but not glutamic or aspartic acids.. Functionally, presumably involved in the processing and regular turnover of intracellular proteins. Catalyzes the removal of unsubstituted N-terminal amino acids from various peptides. This Histophilus somni (strain 2336) (Haemophilus somnus) protein is Probable cytosol aminopeptidase.